The chain runs to 373 residues: tRNA-specific 2-thiouridylase MnmA (373 aa).

ATP contacts are provided by residues 12–19 (GMSGGVDS) and M38. The interval 98–100 (NPD) is interaction with target base in tRNA. The active-site Nucleophile is the C103. Residues C103 and C200 are joined by a disulfide bond. An ATP-binding site is contributed by G127. Residues 150 to 152 (KDQ) are interaction with tRNA. C200 serves as the catalytic Cysteine persulfide intermediate. Positions 312-313 (RY) are interaction with tRNA.

The protein belongs to the MnmA/TRMU family.

It is found in the cytoplasm. The enzyme catalyses S-sulfanyl-L-cysteinyl-[protein] + uridine(34) in tRNA + AH2 + ATP = 2-thiouridine(34) in tRNA + L-cysteinyl-[protein] + A + AMP + diphosphate + H(+). In terms of biological role, catalyzes the 2-thiolation of uridine at the wobble position (U34) of tRNA, leading to the formation of s(2)U34. The chain is tRNA-specific 2-thiouridylase MnmA from Streptococcus pyogenes serotype M6 (strain ATCC BAA-946 / MGAS10394).